Here is a 436-residue protein sequence, read N- to C-terminus: MAATMAVTTMVTRSKESWSSLQVPAVAFPWKPRGGKTGGLEFPRRAMFASVGLNVCPGVPAGRDPREPDPKVVRAADNCDIAASLAPPFPGSRPPGRRGRGSEEEEAEGRRHEEAAAAGRSEPEEGQGQDRQPAPARLVSGAIAGAVSRTFVAPLETIRTHLMVGSIGVDSMAGVFQWIMQNEGWTGLFRGNAVNVLRVAPSKAIEHFTYDTAKKFLTPKGDEPPKIPIPTPLVAGALAGFASTLCTYPMELIKTRVTIEKDVYDNVAHAFVKILRDEGPSELYRGLTPSLIGVVPYAACNFYAYETLKRLYRRATGRRPGADVGPVATLLIGSAAGAIASSATFPLEVARKQMQVGAVGGRQVYQNVLHAIYCILKKEGAGGLYRGLGPSCIKLMPAAGIAFMCYEACKKILVDKEDEEEEDEAGGGEDDKKKVE.

Residues 83–135 are disordered; sequence ASLAPPFPGSRPPGRRGRGSEEEEAEGRRHEEAAAAGRSEPEEGQGQDRQPAP. 3 Solcar repeats span residues 132–216, 227–311, and 324–412; these read QPAP…AKKF, IPIP…LKRL, and VGPV…CKKI. 6 helical membrane-spanning segments follow: residues 137-158, 193-213, 229-247, 290-310, 327-347, and 384-405; these read RLVSGAIAGAVSRTFVAPLETI, AVNVLRVAPSKAIEHFTYDTA, IPTPLVAGALAGFASTLCT, SLIGVVPYAACNFYAYETLKR, VATLLIGSAAGAIASSATFPL, and LYRGLGPSCIKLMPAAGIAFMC. Acidic residues predominate over residues 417–428; the sequence is EDEEEEDEAGGG. Residues 417–436 are disordered; the sequence is EDEEEEDEAGGGEDDKKKVE.

It belongs to the mitochondrial carrier (TC 2.A.29) family. In terms of tissue distribution, highly expressed in silks and endosperm of developing kernels. Expressed at intermediate levels in tassels and lower levels in stems and leaves.

Its subcellular location is the plastid. The protein resides in the chloroplast inner membrane. It is found in the amyloplast inner membrane. The protein localises to the mitochondrion inner membrane. With respect to regulation, inhibited by mersalyl. Probable adenylate translocator that mediates transport of ADP-glucose into endosperm storage plastids during starch synthesis. Transports cytosolic ADP-glucose to amyloplast stroma by counter-exchange with ADP. In Zea mays (Maize), this protein is Adenine nucleotide transporter BT1, chloroplastic/amyloplastic/mitochondrial (BT1).